We begin with the raw amino-acid sequence, 77 residues long: Acyl carrier protein (77 aa).

One can recognise a Carrier domain in the interval 2–77 (ADVLERVTKI…DAVTYIESHL (76 aa)). Serine 37 carries the post-translational modification O-(pantetheine 4'-phosphoryl)serine.

Belongs to the acyl carrier protein (ACP) family. 4'-phosphopantetheine is transferred from CoA to a specific serine of apo-ACP by AcpS. This modification is essential for activity because fatty acids are bound in thioester linkage to the sulfhydryl of the prosthetic group.

It localises to the cytoplasm. The protein operates within lipid metabolism; fatty acid biosynthesis. Carrier of the growing fatty acid chain in fatty acid biosynthesis. In Bacillus anthracis (strain A0248), this protein is Acyl carrier protein.